The chain runs to 395 residues: MNENSISQYSEIDLISDNPFKNYFVVEKLLNNNNNNINDTIGNNHYSNNNNNNKFLNNNNKNKINKKQIILKVQKKSNKAMKELTVMQKIGYYSNHVVNVYGYFNLKGCDRMLKPRLLSDNDELIFMECEDMGQYQTLEMIIERRKCKGSLVMTRFIMRGILASAYYFESHQVIHQTLHPGNIYILEDSLGTDDQSVVKFSNLEHCLLIGSTNSSLSSLSSSTSSSSSSSSSTNCNNNTTENNNNNYNNNNNNNNNNNNNNNNNSLNDRFVLGKDSVCYSIYSDRHQSRNLFKVVSSNTVSFTVGIIYLELLLSTIYDHVFPNEEYINSLREIVRNGKLDIYTNQATNTKYFRFNQNHQIEITDLIKDDISLILTLLQDSSTRPTITQFIIDYLF.

Residues Tyr9 to Phe395 enclose the Protein kinase domain. ATP is bound by residues Ile15 to Tyr23 and Lys54. Residues Asn213–Leu266 are disordered.

This sequence belongs to the protein kinase superfamily. Ser/Thr protein kinase family.

This Dictyostelium discoideum (Social amoeba) protein is Probable inactive serine/threonine-protein kinase DDB_G0293746.